The sequence spans 60 residues: Pepsin A (60 aa).

The propeptide at phenylalanine 1–valine 45 is activation peptide.

The protein belongs to the peptidase A1 family.

Its subcellular location is the secreted. The catalysed reaction is Preferential cleavage: hydrophobic, preferably aromatic, residues in P1 and P1' positions. Cleaves 1-Phe-|-Val-2, 4-Gln-|-His-5, 13-Glu-|-Ala-14, 14-Ala-|-Leu-15, 15-Leu-|-Tyr-16, 16-Tyr-|-Leu-17, 23-Gly-|-Phe-24, 24-Phe-|-Phe-25 and 25-Phe-|-Tyr-26 bonds in the B chain of insulin.. Shows particularly broad specificity; although bonds involving phenylalanine and leucine are preferred, many others are also cleaved to some extent. This is Pepsin A (PGA) from Ursus thibetanus (Asiatic black bear).